We begin with the raw amino-acid sequence, 306 residues long: Peroxisome biogenesis factor 10 (306 aa).

Topologically, residues 1–52 are peroxisomal matrix; that stretch reads MHLSAHIDPLQIILCTEIDEACIQFIKSQIEGIARACGPRMQANFEGVLIPY. Residues 53-84 traverse the membrane as a helical segment; that stretch reads VDVLGKFLYRACCLRYATMGEEAARIVLAKQD. Residues 85 to 147 lie on the Cytoplasmic side of the membrane; that stretch reads RSKGLVLATT…PEAVISKEKH (63 aa). Residues 148 to 174 form a helical membrane-spanning segment; that stretch reads LVYILNSFKPILLKLVSIIRFLCLTMK. At 175-202 the chain is on the peroxisomal matrix side; the sequence is GHCATVSQLLLGLKYISLDEINPEEKKK. A helical transmembrane segment spans residues 203 to 219; the sequence is VLTLLLLLGSRLIASIL. Over 220–306 the chain is Cytoplasmic; the sequence is QHSNSYFDQH…SSPSKIILLR (87 aa). Residues Cys256, Cys259, Cys271, His273, Cys276, Cys279, Cys290, and Cys293 each contribute to the Zn(2+) site. An RING-type zinc finger spans residues 256-294; that stretch reads CSLCMEFIHCPAATECGHIFCWSCINGWTSKKSECPLCR.

This sequence belongs to the pex2/pex10/pex12 family. As to quaternary structure, component of the PEX2-PEX10-PEX12 retrotranslocation channel, composed of PEX2, PEX10 and PEX12.

It localises to the peroxisome membrane. The catalysed reaction is S-ubiquitinyl-[E2 ubiquitin-conjugating enzyme]-L-cysteine + [acceptor protein]-L-lysine = [E2 ubiquitin-conjugating enzyme]-L-cysteine + N(6)-ubiquitinyl-[acceptor protein]-L-lysine.. It participates in protein modification; protein ubiquitination. The E3 ubiquitin-protein ligase activity is stimulated by PEX12. In terms of biological role, E3 ubiquitin-protein ligase component of a retrotranslocation channel required for peroxisome organization by mediating export of the PEX5 receptor from peroxisomes to the cytosol, thereby promoting PEX5 recycling. The retrotranslocation channel is composed of PEX2, PEX10 and PEX12; each subunit contributing transmembrane segments that coassemble into an open channel that specifically allows the passage of PEX5 through the peroxisomal membrane. PEX10 also regulates PEX5 recycling by acting as a E3 ubiquitin-protein ligase. When PEX5 recycling is compromised, PEX10 catalyzes polyubiquitination of PEX5 during its passage through the retrotranslocation channel, leading to its degradation. This is Peroxisome biogenesis factor 10 (pas4) from Schizosaccharomyces pombe (strain 972 / ATCC 24843) (Fission yeast).